We begin with the raw amino-acid sequence, 212 residues long: Large ribosomal subunit protein uL3 (212 aa).

Positions 140 to 155 (SVSHRAIGSTGQNQSP) are enriched in polar residues. The segment at 140 to 166 (SVSHRAIGSTGQNQSPGKVFKGKKMPG) is disordered. At Gln153 the chain carries N5-methylglutamine.

It belongs to the universal ribosomal protein uL3 family. In terms of assembly, part of the 50S ribosomal subunit. Forms a cluster with proteins L14 and L19. In terms of processing, methylated by PrmB.

Its function is as follows. One of the primary rRNA binding proteins, it binds directly near the 3'-end of the 23S rRNA, where it nucleates assembly of the 50S subunit. The sequence is that of Large ribosomal subunit protein uL3 from Psychrobacter cryohalolentis (strain ATCC BAA-1226 / DSM 17306 / VKM B-2378 / K5).